Here is a 166-residue protein sequence, read N- to C-terminus: Large ribosomal subunit protein eL14 (166 aa).

Positions 135 to 166 (KADGTPRVLKKDRRERLRAEKAKGGKKAAAKK) are disordered. Basic and acidic residues predominate over residues 146-157 (DRRERLRAEKAK).

This sequence belongs to the eukaryotic ribosomal protein eL14 family.

The sequence is that of Large ribosomal subunit protein eL14 (RpL14) from Drosophila melanogaster (Fruit fly).